Reading from the N-terminus, the 565-residue chain is Sulfite reductase [NADPH] hemoprotein beta-component (565 aa).

[4Fe-4S] cluster is bound by residues Cys429, Cys435, Cys474, and Cys478. Cys478 provides a ligand contact to siroheme.

This sequence belongs to the nitrite and sulfite reductase 4Fe-4S domain family. In terms of assembly, alpha(8)-beta(8). The alpha component is a flavoprotein, the beta component is a hemoprotein. It depends on siroheme as a cofactor. [4Fe-4S] cluster is required as a cofactor.

The enzyme catalyses hydrogen sulfide + 3 NADP(+) + 3 H2O = sulfite + 3 NADPH + 4 H(+). The protein operates within sulfur metabolism; hydrogen sulfide biosynthesis; hydrogen sulfide from sulfite (NADPH route): step 1/1. Functionally, component of the sulfite reductase complex that catalyzes the 6-electron reduction of sulfite to sulfide. This is one of several activities required for the biosynthesis of L-cysteine from sulfate. The protein is Sulfite reductase [NADPH] hemoprotein beta-component of Pseudoalteromonas translucida (strain TAC 125).